The following is a 302-amino-acid chain: Dioxygenase ALT11 (302 aa).

Residues 1–22 (MSSPELPSQMGVPNGHTKLQEV) form a disordered region. 3 residues coordinate Fe cation: His147, Asp149, and His223.

Belongs to the PhyH family. Homodimer. Fe cation serves as cofactor.

It participates in mycotoxin biosynthesis. Dioxygenase; part of the gene cluster that mediates the biosynthesis of the host-selective toxins (HSTs) AAL-toxins, sphinganine-analog mycotoxins responsible for Alternaria stem canker on tomato by the tomato pathotype. The biosynthesis starts with the polyketide synthase ALT1-catalyzed C-16 carbon chain assembly from one starter acetyl-CoA unit with malonyl-CoA extender units. ALT1 also selectively transfers methyl groups at the first and the third cycle of chain elongation for AAL toxin. The C-16 polyketide chain is released from the enzyme by a nucleophilic attack of a carbanion, which is derived from R-carbon of glycin by decarboxylation, on the carbonyl carbon of polyketide acyl chain. This step is probably catalyzed by a pyridoxal 5'-phosphate-dependent aminoacyl transferase ALT4. The respective functions of the other enzymes encoded by the cluster have still to be elucidated. The sphingosine N-acyltransferase-like protein ALT7 seems not to act as a resistance/self-tolerance factor against the toxin in the toxin biosynthetic gene cluster, contrary to what is expected. The protein is Dioxygenase ALT11 of Alternaria alternata (Alternaria rot fungus).